Here is a 389-residue protein sequence, read N- to C-terminus: Succinyl-diaminopimelate desuccinylase (389 aa).

His72 contributes to the Zn(2+) binding site. Asp74 is an active-site residue. Asp105 contacts Zn(2+). The active-site Proton acceptor is Glu144. The Zn(2+) site is built by Glu145, Glu173, and His362.

It belongs to the peptidase M20A family. DapE subfamily. Homodimer. The cofactor is Zn(2+). It depends on Co(2+) as a cofactor.

The catalysed reaction is N-succinyl-(2S,6S)-2,6-diaminopimelate + H2O = (2S,6S)-2,6-diaminopimelate + succinate. Its pathway is amino-acid biosynthesis; L-lysine biosynthesis via DAP pathway; LL-2,6-diaminopimelate from (S)-tetrahydrodipicolinate (succinylase route): step 3/3. Functionally, catalyzes the hydrolysis of N-succinyl-L,L-diaminopimelic acid (SDAP), forming succinate and LL-2,6-diaminopimelate (DAP), an intermediate involved in the bacterial biosynthesis of lysine and meso-diaminopimelic acid, an essential component of bacterial cell walls. This Nitrobacter hamburgensis (strain DSM 10229 / NCIMB 13809 / X14) protein is Succinyl-diaminopimelate desuccinylase.